Consider the following 295-residue polypeptide: Deleted in azoospermia-like (295 aa).

Polar residues predominate over residues Met1–Asn10. The disordered stretch occupies residues Met1–Ala25. The span at Ser11–Ala25 shows a compositional bias: low complexity. The 76-residue stretch at Asn40–Arg115 folds into the RRM domain. Positions Lys80–Asn132 are homodimerization. The 24-residue stretch at Ala167 to Gln190 folds into the DAZ domain. Tyr276 carries the post-translational modification Phosphotyrosine.

Belongs to the RRM DAZ family. Homodimer and heterodimer. Forms a heterodimer with DAZ. Interacts with BOLL, DAZAP1 and DAZAP2. Interacts with PUM2 Multiple DAZL RRMs can bind to a single RNA containing multiple GUU triplets. Testis specific.

The protein localises to the cytoplasm. It localises to the nucleus. Functionally, RNA-binding protein, which is essential for gametogenesis in both males and females. Plays a central role during spermatogenesis. Acts by binding to the 3'-UTR of mRNA, specifically recognizing GUU triplets, and thereby regulating the translation of key transcripts. The chain is Deleted in azoospermia-like (DAZL) from Macaca fascicularis (Crab-eating macaque).